A 270-amino-acid polypeptide reads, in one-letter code: Acyl-[acyl-carrier-protein]--UDP-N-acetylglucosamine O-acyltransferase (270 aa).

It belongs to the transferase hexapeptide repeat family. LpxA subfamily. Homotrimer.

The protein resides in the cytoplasm. It catalyses the reaction a (3R)-hydroxyacyl-[ACP] + UDP-N-acetyl-alpha-D-glucosamine = a UDP-3-O-[(3R)-3-hydroxyacyl]-N-acetyl-alpha-D-glucosamine + holo-[ACP]. It participates in glycolipid biosynthesis; lipid IV(A) biosynthesis; lipid IV(A) from (3R)-3-hydroxytetradecanoyl-[acyl-carrier-protein] and UDP-N-acetyl-alpha-D-glucosamine: step 1/6. Its function is as follows. Involved in the biosynthesis of lipid A, a phosphorylated glycolipid that anchors the lipopolysaccharide to the outer membrane of the cell. This chain is Acyl-[acyl-carrier-protein]--UDP-N-acetylglucosamine O-acyltransferase, found in Helicobacter pylori (strain Shi470).